The primary structure comprises 581 residues: Chaperonin GroEL 1 (581 aa).

ATP contacts are provided by residues 29–32 (TIGP), 86–90 (DGTTT), Gly413, and Asp492. Residues 522–541 (PEPEAAGPGGPGADPMGGMG) are disordered. The span at 528–541 (GPGGPGADPMGGMG) shows a compositional bias: gly residues.

Belongs to the chaperonin (HSP60) family. As to quaternary structure, forms a cylinder of 14 subunits composed of two heptameric rings stacked back-to-back. Interacts with the co-chaperonin GroES.

The protein resides in the cytoplasm. The enzyme catalyses ATP + H2O + a folded polypeptide = ADP + phosphate + an unfolded polypeptide.. Functionally, together with its co-chaperonin GroES, plays an essential role in assisting protein folding. The GroEL-GroES system forms a nano-cage that allows encapsulation of the non-native substrate proteins and provides a physical environment optimized to promote and accelerate protein folding. In Prochlorococcus marinus (strain MIT 9301), this protein is Chaperonin GroEL 1.